The chain runs to 281 residues: NADPH-dependent 7-cyano-7-deazaguanine reductase (281 aa).

87 to 89 serves as a coordination point for substrate; the sequence is IES. 89–90 provides a ligand contact to NADPH; it reads SK. C188 serves as the catalytic Thioimide intermediate. Catalysis depends on D195, which acts as the Proton donor. 227–228 contacts substrate; that stretch reads HE. 256 to 257 is a binding site for NADPH; that stretch reads RG. Residues 261-281 are disordered; it reads INPYRSTEQAKPDHNHRMARQ. Over residues 268-281 the composition is skewed to basic and acidic residues; it reads EQAKPDHNHRMARQ.

Belongs to the GTP cyclohydrolase I family. QueF type 2 subfamily. As to quaternary structure, homodimer.

It localises to the cytoplasm. It carries out the reaction 7-aminomethyl-7-carbaguanine + 2 NADP(+) = 7-cyano-7-deazaguanine + 2 NADPH + 3 H(+). Its pathway is tRNA modification; tRNA-queuosine biosynthesis. In terms of biological role, catalyzes the NADPH-dependent reduction of 7-cyano-7-deazaguanine (preQ0) to 7-aminomethyl-7-deazaguanine (preQ1). This Vibrio vulnificus (strain CMCP6) protein is NADPH-dependent 7-cyano-7-deazaguanine reductase.